The primary structure comprises 229 residues: MAKLTKKMKAIKAGVDSTKAYEINEAIALLKQFATAKFVESVDVAVNLGIDPRKSDQNVRGATVLPHGTGRSARVAVFTQGANAEAAKAAGADLVGMEDLAEQIKKGEMNFDVVIASPDAMRVVGQLGQVLGPRGLMPNPKVGTVTLNVAEAVKNAKSGQIRYRNDKNGIIHTTIGKVDFSEVQLKENLQALLAALNKAKPTTAKGIFIKKVSVSTTMGAGVAVEQTSL.

The protein belongs to the universal ribosomal protein uL1 family. As to quaternary structure, part of the 50S ribosomal subunit.

Binds directly to 23S rRNA. The L1 stalk is quite mobile in the ribosome, and is involved in E site tRNA release. Its function is as follows. Protein L1 is also a translational repressor protein, it controls the translation of the L11 operon by binding to its mRNA. This Haemophilus ducreyi (strain 35000HP / ATCC 700724) protein is Large ribosomal subunit protein uL1.